Reading from the N-terminus, the 176-residue chain is ATP-dependent protease subunit HslV (176 aa).

Residue threonine 4 is part of the active site. Alanine 159, cysteine 162, and threonine 165 together coordinate Na(+).

This sequence belongs to the peptidase T1B family. HslV subfamily. As to quaternary structure, a double ring-shaped homohexamer of HslV is capped on each side by a ring-shaped HslU homohexamer. The assembly of the HslU/HslV complex is dependent on binding of ATP.

Its subcellular location is the cytoplasm. It catalyses the reaction ATP-dependent cleavage of peptide bonds with broad specificity.. Its activity is regulated as follows. Allosterically activated by HslU binding. In terms of biological role, protease subunit of a proteasome-like degradation complex believed to be a general protein degrading machinery. This Wolbachia sp. subsp. Brugia malayi (strain TRS) protein is ATP-dependent protease subunit HslV.